The following is a 193-amino-acid chain: Holliday junction branch migration complex subunit RuvA (193 aa).

The segment at 1-64 is domain I; sequence MIGRIAGILL…EDAHLLYGFL (64 aa). Positions 65–139 are domain II; it reads TPQERTTFRE…GKLGADLGAL (75 aa). The interval 139–143 is flexible linker; that stretch reads LAGAA. The segment at 144–193 is domain III; that stretch reads SASDHATDILNALLALGYSEKEGLAAIKNVPAGTGVSEGIKLALKALSKA.

It belongs to the RuvA family. Homotetramer. Forms an RuvA(8)-RuvB(12)-Holliday junction (HJ) complex. HJ DNA is sandwiched between 2 RuvA tetramers; dsDNA enters through RuvA and exits via RuvB. An RuvB hexamer assembles on each DNA strand where it exits the tetramer. Each RuvB hexamer is contacted by two RuvA subunits (via domain III) on 2 adjacent RuvB subunits; this complex drives branch migration. In the full resolvosome a probable DNA-RuvA(4)-RuvB(12)-RuvC(2) complex forms which resolves the HJ.

It is found in the cytoplasm. In terms of biological role, the RuvA-RuvB-RuvC complex processes Holliday junction (HJ) DNA during genetic recombination and DNA repair, while the RuvA-RuvB complex plays an important role in the rescue of blocked DNA replication forks via replication fork reversal (RFR). RuvA specifically binds to HJ cruciform DNA, conferring on it an open structure. The RuvB hexamer acts as an ATP-dependent pump, pulling dsDNA into and through the RuvAB complex. HJ branch migration allows RuvC to scan DNA until it finds its consensus sequence, where it cleaves and resolves the cruciform DNA. The chain is Holliday junction branch migration complex subunit RuvA from Burkholderia cenocepacia (strain HI2424).